A 21-amino-acid chain; its full sequence is Nitrilase (21 aa).

Belongs to the carbon-nitrogen hydrolase superfamily. Nitrilase family.

The catalysed reaction is a nitrile + 2 H2O = a carboxylate + NH4(+). Functionally, acts on many kinds of nitrile compounds such as aliphatic, aromatic, and heterocyclic mononitriles or dinitriles. Prefers S-(-)-2-(4'-isobutylphenyl)-propionitrile to R-(+)-2-(4'-isobutylphenyl)-propionitrile as the substrate. The protein is Nitrilase of Acinetobacter sp. (strain AK226).